The chain runs to 478 residues: Odorant receptor coreceptor (478 aa).

Topologically, residues 1–43 (MNVQPTKYHGLVLDLMPNIRLMQGFGHFLFRYVNGPVLIRKLY) are cytoplasmic. A helical transmembrane segment spans residues 44-64 (SWWNLIMILLQYFAIMGNLVM). Residues 65 to 73 (NTGDVNELT) lie on the Extracellular side of the membrane. Residues 74–94 (ANTITTLFFTHSVTKFIYVAV) form a helical membrane-spanning segment. Residues 95–133 (NSEHFYRTLGIWNQPNSHSLFAESDARYHSIALAKMRKL) are Cytoplasmic-facing. Residues 134–154 (LVMVMVTTVLSVVAWITITFF) form a helical membrane-spanning segment. At 155 to 187 (GDSVKNVFDKETNETYTVEIPRLPIKAWYPWDA) the chain is on the extracellular side. Residue N167 is glycosylated (N-linked (GlcNAc...) asparagine). A helical transmembrane segment spans residues 188 to 208 (MSGVPYFFSFIYQAYFLLFSM). The Cytoplasmic segment spans residues 209–343 (CQANLADVMF…VERHKHVVRL (135 aa)). A helical membrane pass occupies residues 344 to 364 (VSAIGETYGAALLLHMLTSTI). The Extracellular portion of the chain corresponds to 365–382 (KLTLLAYQATKIDALNVY). Residues 383–403 (GLTVIGYLVYALAQVFLFCIF) form a helical membrane-spanning segment. The Cytoplasmic segment spans residues 404-454 (GNRLIEESSSVMEAAYSCHWYDGSEEAKTFVQIVCQQCQKAMTISGAKFFT). The chain crosses the membrane as a helical span at residues 455-475 (VSLDLFASVLGAVVTYFMVLV). Residues 476 to 478 (QLK) lie on the Extracellular side of the membrane.

The protein belongs to the insect chemoreceptor superfamily. Heteromeric odorant receptor channel (TC 1.A.69) family. Orco subfamily. As to quaternary structure, heterodimer with conventional odorant receptors (ORs). Complexes exist early in the endomembrane system in olfactory sensory neurons (OSNs), coupling these complexes to the conserved ciliary trafficking pathway. Found specifically within most antennal and maxillary palp sensilla, as well as in a subset of proboscis sensilla.

Its subcellular location is the cell membrane. Its function is as follows. Odorant coreceptor which complexes with conventional odorant receptors (ORs) to form odorant-sensing units, providing sensitive and prolonged odorant signaling and calcium permeability. Orco is a universal and integral part of the functional odorant receptor, involved in the dendritic localization of other olfactory receptors. Plays a key role in preferred attraction of females for humans over non-human hosts for blood feeding. Human attraction plays a crucial role in the transmission of dengue and yellow fever by the mosquito. Also required for the response to the insect repellent IR3535; or to N,N-Diethyl-meta-toluamide (DEET), the most widely used insect repellent worldwide. This Aedes aegypti (Yellowfever mosquito) protein is Odorant receptor coreceptor (SGPRor7).